We begin with the raw amino-acid sequence, 408 residues long: tRNA-specific 2-thiouridylase MnmA (408 aa).

ATP-binding positions include 38 to 45 and Met-64; that span reads GMSGGVDS. An interaction with target base in tRNA region spans residues 124–126; the sequence is NPD. The active-site Nucleophile is the Cys-129. Residues Cys-129 and Cys-231 are joined by a disulfide bond. Gly-153 contributes to the ATP binding site. Residues 181 to 183 form an interaction with tRNA region; that stretch reads KDQ. Residue Cys-231 is the Cysteine persulfide intermediate of the active site. The segment at 348–349 is interaction with tRNA; it reads RY.

The protein belongs to the MnmA/TRMU family.

The protein localises to the cytoplasm. The catalysed reaction is S-sulfanyl-L-cysteinyl-[protein] + uridine(34) in tRNA + AH2 + ATP = 2-thiouridine(34) in tRNA + L-cysteinyl-[protein] + A + AMP + diphosphate + H(+). Its function is as follows. Catalyzes the 2-thiolation of uridine at the wobble position (U34) of tRNA, leading to the formation of s(2)U34. In Psychrobacter cryohalolentis (strain ATCC BAA-1226 / DSM 17306 / VKM B-2378 / K5), this protein is tRNA-specific 2-thiouridylase MnmA.